Consider the following 479-residue polypeptide: U2 small nuclear ribonucleoprotein auxiliary factor 35 kDa subunit-related protein 1 (479 aa).

A disordered region spans residues 1–63; the sequence is MAALEKMTFP…EDTFIEEQQL (63 aa). Residues 20–37 are compositionally biased toward basic residues; it reads SHKKYRAALKKEKRKKRR. A compositionally biased stretch (acidic residues) spans 50 to 63; the sequence is QEEEEDTFIEEQQL. Residue K67 forms a Glycyl lysine isopeptide (Lys-Gly) (interchain with G-Cter in SUMO2) linkage. Residues 171 to 199 form a C3H1-type 1 zinc finger; it reads EKDRANCPFYSKTGACRFGDRCSRKHNFP. The RRM domain maps to 203-309; sequence PTLLIKSMFT…RQLQCEFCPV (107 aa). The segment at 311–338 adopts a C3H1-type 2 zinc-finger fold; that stretch reads RWKMAICGLFEIQQCPRGKHCNFLHVFR. S354 carries the post-translational modification Phosphoserine. The segment at 356-479 is disordered; that stretch reads DQTGSSFGKN…DRTVQSPQSK (124 aa). Basic and acidic residues-rich tracts occupy residues 365-379 and 388-403; these read NSER…DHYY and PSPD…SERK. S389 carries the phosphoserine modification. Basic residues-rich tracts occupy residues 404–417 and 442–451; these read KSSH…KRTS and SQSRRSHRSR.

Its subcellular location is the nucleus. This is U2 small nuclear ribonucleoprotein auxiliary factor 35 kDa subunit-related protein 1 from Homo sapiens (Human).